We begin with the raw amino-acid sequence, 378 residues long: Mannitol-1-phosphate 5-dehydrogenase (378 aa).

Residue 4–15 (SVHFGAGNIGRG) participates in NAD(+) binding.

This sequence belongs to the mannitol dehydrogenase family.

The enzyme catalyses D-mannitol 1-phosphate + NAD(+) = beta-D-fructose 6-phosphate + NADH + H(+). The chain is Mannitol-1-phosphate 5-dehydrogenase from Streptococcus pneumoniae serotype 4 (strain ATCC BAA-334 / TIGR4).